We begin with the raw amino-acid sequence, 332 residues long: T-cell surface glycoprotein CD1c3 (332 aa).

An N-terminal signal peptide occupies residues 1–17 (MLFLQFLFLDVVLGGSI). The Extracellular portion of the chain corresponds to 18-300 (TKNVVQENIS…IILYWGHGLS (283 aa)). Residues Asn25, Asn38, Asn75, and Asn146 are each glycosylated (N-linked (GlcNAc...) asparagine). 2 disulfide bridges follow: Cys120–Cys184 and Cys224–Cys279. The 88-residue stretch at 205–292 (PEVWLSSSPN…HSSLRDQDII (88 aa)) folds into the Ig-like domain. Residues 301–321 (VILITFAVIVPLVLLIILVLL) form a helical membrane-spanning segment. Topologically, residues 322-332 (CKKCCTYQGIP) are cytoplasmic.

In terms of assembly, heterodimer with B2M (beta-2-microglobulin).

It localises to the cell membrane. It is found in the endosome membrane. In terms of biological role, antigen-presenting protein that binds self and non-self lipid and glycolipid antigens and presents them to T-cell receptors on natural killer T-cells. This chain is T-cell surface glycoprotein CD1c3 (CD1C3), found in Cavia porcellus (Guinea pig).